A 446-amino-acid chain; its full sequence is Probable D-serine dehydratase (446 aa).

An N6-(pyridoxal phosphate)lysine modification is found at K113.

The protein belongs to the serine/threonine dehydratase family. DsdA subfamily. Requires pyridoxal 5'-phosphate as cofactor.

It carries out the reaction D-serine = pyruvate + NH4(+). The sequence is that of Probable D-serine dehydratase from Burkholderia lata (strain ATCC 17760 / DSM 23089 / LMG 22485 / NCIMB 9086 / R18194 / 383).